A 99-amino-acid chain; its full sequence is L-rhamnose mutarotase (99 aa).

Y18 provides a ligand contact to substrate. H22 serves as the catalytic Proton donor. Substrate contacts are provided by residues Y41 and 76-77 (WW).

This sequence belongs to the rhamnose mutarotase family. As to quaternary structure, homodimer.

Its subcellular location is the cytoplasm. The enzyme catalyses alpha-L-rhamnose = beta-L-rhamnose. The protein operates within carbohydrate metabolism; L-rhamnose metabolism. Involved in the anomeric conversion of L-rhamnose. The polypeptide is L-rhamnose mutarotase (Shigella boydii serotype 18 (strain CDC 3083-94 / BS512)).